The following is a 451-amino-acid chain: Phosphoglucosamine mutase (451 aa).

Residue Ser103 is the Phosphoserine intermediate of the active site. Mg(2+) is bound by residues Ser103, Asp243, Asp245, and Asp247. Residue Ser103 is modified to Phosphoserine.

It belongs to the phosphohexose mutase family. Requires Mg(2+) as cofactor. In terms of processing, activated by phosphorylation.

The catalysed reaction is alpha-D-glucosamine 1-phosphate = D-glucosamine 6-phosphate. Its function is as follows. Catalyzes the conversion of glucosamine-6-phosphate to glucosamine-1-phosphate. The sequence is that of Phosphoglucosamine mutase from Lactobacillus gasseri (strain ATCC 33323 / DSM 20243 / BCRC 14619 / CIP 102991 / JCM 1131 / KCTC 3163 / NCIMB 11718 / NCTC 13722 / AM63).